The primary structure comprises 465 residues: Alpha-2A adrenergic receptor (465 aa).

Topologically, residues M1–T48 are extracellular. N25 and N29 each carry an N-linked (GlcNAc...) asparagine glycan. Residues L49–F74 traverse the membrane as a helical segment. Residues T75–L85 lie on the Cytoplasmic side of the membrane. The chain crosses the membrane as a helical span at residues F86–M111. Residues G112–C121 are Extracellular-facing. An intrachain disulfide couples C121 to C203. The chain crosses the membrane as a helical span at residues E122–L144. Residues D145–R164 lie on the Cytoplasmic side of the membrane. The chain crosses the membrane as a helical span at residues I165 to E188. Topologically, residues K189–D207 are extracellular. Residues Q208 to V232 traverse the membrane as a helical segment. The Cytoplasmic segment spans residues R233–F389. Residues T242 to W377 form a disordered region. Residues S313 to P330 are compositionally biased toward basic and acidic residues. S346 is subject to Phosphoserine. Residue R368 is modified to Omega-N-methylarginine. Residues V390–V414 form a helical membrane-spanning segment. The Extracellular segment spans residues G415 to K424. A helical transmembrane segment spans residues F425–N445. Residues H446–V465 lie on the Cytoplasmic side of the membrane. C457 carries S-palmitoyl cysteine lipidation.

This sequence belongs to the G-protein coupled receptor 1 family. Adrenergic receptor subfamily. ADRA2A sub-subfamily.

It is found in the cell membrane. Its function is as follows. Alpha-2 adrenergic receptors mediate the catecholamine-induced inhibition of adenylate cyclase through the action of G proteins. In Sus scrofa (Pig), this protein is Alpha-2A adrenergic receptor.